The chain runs to 242 residues: Biosynthetic peptidoglycan transglycosylase (242 aa).

The helical transmembrane segment at Leu19–Val39 threads the bilayer.

This sequence belongs to the glycosyltransferase 51 family.

Its subcellular location is the cell inner membrane. It catalyses the reaction [GlcNAc-(1-&gt;4)-Mur2Ac(oyl-L-Ala-gamma-D-Glu-L-Lys-D-Ala-D-Ala)](n)-di-trans,octa-cis-undecaprenyl diphosphate + beta-D-GlcNAc-(1-&gt;4)-Mur2Ac(oyl-L-Ala-gamma-D-Glu-L-Lys-D-Ala-D-Ala)-di-trans,octa-cis-undecaprenyl diphosphate = [GlcNAc-(1-&gt;4)-Mur2Ac(oyl-L-Ala-gamma-D-Glu-L-Lys-D-Ala-D-Ala)](n+1)-di-trans,octa-cis-undecaprenyl diphosphate + di-trans,octa-cis-undecaprenyl diphosphate + H(+). It participates in cell wall biogenesis; peptidoglycan biosynthesis. In terms of biological role, peptidoglycan polymerase that catalyzes glycan chain elongation from lipid-linked precursors. This Escherichia coli O81 (strain ED1a) protein is Biosynthetic peptidoglycan transglycosylase.